We begin with the raw amino-acid sequence, 418 residues long: CCA-adding enzyme (418 aa).

2 residues coordinate ATP: Ser54 and Arg57. 2 residues coordinate CTP: Ser54 and Arg57. Residues Asp66, Asp68, and Asp118 each contribute to the Mg(2+) site. His141, Lys161, and Tyr170 together coordinate ATP. CTP contacts are provided by His141, Lys161, and Tyr170.

The protein belongs to the tRNA nucleotidyltransferase/poly(A) polymerase family. Archaeal CCA-adding enzyme subfamily. Homodimer. Mg(2+) is required as a cofactor.

The enzyme catalyses a tRNA precursor + 2 CTP + ATP = a tRNA with a 3' CCA end + 3 diphosphate. The catalysed reaction is a tRNA with a 3' CCA end + 2 CTP + ATP = a tRNA with a 3' CCACCA end + 3 diphosphate. Its function is as follows. Catalyzes the addition and repair of the essential 3'-terminal CCA sequence in tRNAs without using a nucleic acid template. Adds these three nucleotides in the order of C, C, and A to the tRNA nucleotide-73, using CTP and ATP as substrates and producing inorganic pyrophosphate. tRNA 3'-terminal CCA addition is required both for tRNA processing and repair. Also involved in tRNA surveillance by mediating tandem CCA addition to generate a CCACCA at the 3' terminus of unstable tRNAs. While stable tRNAs receive only 3'-terminal CCA, unstable tRNAs are marked with CCACCA and rapidly degraded. The sequence is that of CCA-adding enzyme from Pyrobaculum islandicum (strain DSM 4184 / JCM 9189 / GEO3).